A 269-amino-acid chain; its full sequence is 4-hydroxy-tetrahydrodipicolinate reductase (269 aa).

NAD(+) is bound by residues 13–18 (GASGRM) and D39. Residue R40 participates in NADP(+) binding. Residues 101–103 (GTT) and 125–128 (APNM) each bind NAD(+). H158 acts as the Proton donor/acceptor in catalysis. H159 contributes to the (S)-2,3,4,5-tetrahydrodipicolinate binding site. The active-site Proton donor is the K162. 168-169 (GT) lines the (S)-2,3,4,5-tetrahydrodipicolinate pocket.

Belongs to the DapB family.

The protein localises to the cytoplasm. The catalysed reaction is (S)-2,3,4,5-tetrahydrodipicolinate + NAD(+) + H2O = (2S,4S)-4-hydroxy-2,3,4,5-tetrahydrodipicolinate + NADH + H(+). It carries out the reaction (S)-2,3,4,5-tetrahydrodipicolinate + NADP(+) + H2O = (2S,4S)-4-hydroxy-2,3,4,5-tetrahydrodipicolinate + NADPH + H(+). Its pathway is amino-acid biosynthesis; L-lysine biosynthesis via DAP pathway; (S)-tetrahydrodipicolinate from L-aspartate: step 4/4. In terms of biological role, catalyzes the conversion of 4-hydroxy-tetrahydrodipicolinate (HTPA) to tetrahydrodipicolinate. The sequence is that of 4-hydroxy-tetrahydrodipicolinate reductase from Bordetella bronchiseptica (strain ATCC BAA-588 / NCTC 13252 / RB50) (Alcaligenes bronchisepticus).